A 374-amino-acid polypeptide reads, in one-letter code: Amino acid binding protein (374 aa).

Positions 1 to 27 (MSKKLFRKGILALAVSSVMGLSTHALA) are cleaved as a signal peptide.

The protein belongs to the leucine-binding protein family.

The protein localises to the periplasm. In terms of biological role, binds primarily proteinogenic amino acids. The protein is Amino acid binding protein of Pseudomonas aeruginosa (strain ATCC 15692 / DSM 22644 / CIP 104116 / JCM 14847 / LMG 12228 / 1C / PRS 101 / PAO1).